A 312-amino-acid chain; its full sequence is Malate dehydrogenase (312 aa).

Residues 7–12 (GAGNVG) and Asp32 contribute to the NAD(+) site. Residues Arg82 and Arg88 each coordinate substrate. NAD(+)-binding positions include Asn95 and 118–120 (VSN). Substrate is bound by residues Asn120 and Arg151. The active-site Proton acceptor is the His175.

This sequence belongs to the LDH/MDH superfamily. MDH type 3 family.

It catalyses the reaction (S)-malate + NAD(+) = oxaloacetate + NADH + H(+). Catalyzes the reversible oxidation of malate to oxaloacetate. This is Malate dehydrogenase from Cytophaga hutchinsonii (strain ATCC 33406 / DSM 1761 / CIP 103989 / NBRC 15051 / NCIMB 9469 / D465).